Consider the following 531-residue polypeptide: Acetate CoA-transferase YdiF (531 aa).

Residue Glu-333 is the 5-glutamyl coenzyme A thioester intermediate of the active site.

Belongs to the 3-oxoacid CoA-transferase family. In terms of assembly, homotetramer; dimer of dimers.

The enzyme catalyses an acyl-CoA + acetate = a carboxylate + acetyl-CoA. In terms of biological role, coA transferase having broad substrate specificity for short-chain acyl-CoA thioesters with the activity decreasing when the length of the carboxylic acid chain exceeds four carbons. May play a role in short-chain fatty acid metabolism in E.coli. The polypeptide is Acetate CoA-transferase YdiF (ydiF) (Escherichia coli (strain K12)).